The sequence spans 158 residues: Coenzyme F420 hydrogenase subunit delta (158 aa).

It belongs to the peptidase A31 family.

The protein is Coenzyme F420 hydrogenase subunit delta (frhD) of Methanothermobacter thermautotrophicus (strain ATCC 29096 / DSM 1053 / JCM 10044 / NBRC 100330 / Delta H) (Methanobacterium thermoautotrophicum).